The sequence spans 190 residues: Elongation factor P 2 (190 aa).

This sequence belongs to the elongation factor P family.

The protein localises to the cytoplasm. Its pathway is protein biosynthesis; polypeptide chain elongation. Functionally, involved in peptide bond synthesis. Stimulates efficient translation and peptide-bond synthesis on native or reconstituted 70S ribosomes in vitro. Probably functions indirectly by altering the affinity of the ribosome for aminoacyl-tRNA, thus increasing their reactivity as acceptors for peptidyl transferase. This Chlamydia pneumoniae (Chlamydophila pneumoniae) protein is Elongation factor P 2 (efp2).